The chain runs to 220 residues: NAD(P)H-quinone oxidoreductase subunit M, chloroplastic (220 aa).

The N-terminal 37 residues, 1-37 (MATTASPFLSPAKLSLERRLPRATWTARRSVRFPPVR), are a transit peptide targeting the chloroplast. The interval 20–91 (LPRATWTARR…PVQPLAESKN (72 aa)) is disordered. The segment covering 34–44 (PPVRAQDQQQQ) has biased composition (low complexity).

It belongs to the NDH complex subunit M family. Part of the chloroplast NDH complex, composed of a mixture of chloroplast and nucleus encoded subunits. Component of the NDH subcomplex A, at least composed of ndhH, ndhI, ndhJ, ndhK, ndhL, ndhM, ndhN and ndhO.

Its subcellular location is the plastid. It localises to the chloroplast thylakoid membrane. The enzyme catalyses a plastoquinone + NADH + (n+1) H(+)(in) = a plastoquinol + NAD(+) + n H(+)(out). It catalyses the reaction a plastoquinone + NADPH + (n+1) H(+)(in) = a plastoquinol + NADP(+) + n H(+)(out). In terms of biological role, NDH shuttles electrons from NAD(P)H:plastoquinone, via FMN and iron-sulfur (Fe-S) centers, to quinones in the photosynthetic chain and possibly in a chloroplast respiratory chain. The immediate electron acceptor for the enzyme in this species is believed to be plastoquinone. Couples the redox reaction to proton translocation, and thus conserves the redox energy in a proton gradient. The chain is NAD(P)H-quinone oxidoreductase subunit M, chloroplastic from Oryza sativa subsp. indica (Rice).